The primary structure comprises 269 residues: Gene 69 protein (269 aa).

This Mycobacterium (Mycobacteriophage D29) protein is Gene 69 protein (69).